The sequence spans 162 residues: uncharacterized protein (162 aa).

Helical transmembrane passes span I10–L30, I50–N70, I96–L116, and F125–F145.

It localises to the cell membrane. This is an uncharacterized protein from Methanocaldococcus jannaschii (strain ATCC 43067 / DSM 2661 / JAL-1 / JCM 10045 / NBRC 100440) (Methanococcus jannaschii).